Reading from the N-terminus, the 393-residue chain is NAD(P)H-quinone oxidoreductase subunit H, chloroplastic (393 aa).

This sequence belongs to the complex I 49 kDa subunit family. NDH is composed of at least 16 different subunits, 5 of which are encoded in the nucleus.

The protein localises to the plastid. Its subcellular location is the chloroplast thylakoid membrane. The enzyme catalyses a plastoquinone + NADH + (n+1) H(+)(in) = a plastoquinol + NAD(+) + n H(+)(out). The catalysed reaction is a plastoquinone + NADPH + (n+1) H(+)(in) = a plastoquinol + NADP(+) + n H(+)(out). Its function is as follows. NDH shuttles electrons from NAD(P)H:plastoquinone, via FMN and iron-sulfur (Fe-S) centers, to quinones in the photosynthetic chain and possibly in a chloroplast respiratory chain. The immediate electron acceptor for the enzyme in this species is believed to be plastoquinone. Couples the redox reaction to proton translocation, and thus conserves the redox energy in a proton gradient. The protein is NAD(P)H-quinone oxidoreductase subunit H, chloroplastic of Lepidium virginicum (Virginia pepperweed).